We begin with the raw amino-acid sequence, 417 residues long: D-amino acid dehydrogenase (417 aa).

FAD is bound at residue 3 to 17 (AVVLGSGVVGLMSAW).

The protein belongs to the DadA oxidoreductase family. Requires FAD as cofactor.

It carries out the reaction a D-alpha-amino acid + A + H2O = a 2-oxocarboxylate + AH2 + NH4(+). In terms of biological role, oxidative deamination of D-amino acids. The polypeptide is D-amino acid dehydrogenase (Vibrio vulnificus (strain YJ016)).